Here is a 155-residue protein sequence, read N- to C-terminus: 3-dehydroquinate dehydratase 1 (155 aa).

Tyr28 (proton acceptor) is an active-site residue. Positions 80, 86, and 93 each coordinate substrate. Catalysis depends on His106, which acts as the Proton donor. Residues 107–108 and Arg117 each bind substrate; that span reads VT.

The protein belongs to the type-II 3-dehydroquinase family. Homododecamer.

The enzyme catalyses 3-dehydroquinate = 3-dehydroshikimate + H2O. Its pathway is metabolic intermediate biosynthesis; chorismate biosynthesis; chorismate from D-erythrose 4-phosphate and phosphoenolpyruvate: step 3/7. Its function is as follows. Catalyzes a trans-dehydration via an enolate intermediate. The polypeptide is 3-dehydroquinate dehydratase 1 (aroQ1) (Bradyrhizobium diazoefficiens (strain JCM 10833 / BCRC 13528 / IAM 13628 / NBRC 14792 / USDA 110)).